Consider the following 533-residue polypeptide: Acetone monooxygenase (methyl acetate-forming) (533 aa).

FAD is bound by residues 43 to 46, 55 to 56, and Tyr-61; these read TWYW and DS. Residue 53-55 coordinates NADP(+); sequence RFD. NADP(+)-binding positions include 183–189, 206–207, and Trp-492; these read NGATGIQ and RT.

It belongs to the FAD-binding monooxygenase family. Homotetramer. Requires FAD as cofactor.

The enzyme catalyses acetone + NADPH + O2 + H(+) = methyl acetate + NADP(+) + H2O. Functionally, plays an important role in the metabolism of acetone derived from propane oxidation. Catalyzes the oxidation of acetone to methyl acetate. Exhibits high catalytic efficiency towards various linear and cyclic ketones, such as butanone, 2-pentanone, 2-heptanone, 2-octanone, 2-nonanone, 2-decanone, cyclobutanone, cyclopentanone and cyclohexanone. Elicits the highest catalytic efficiency towards butanone and cyclobutanone. Is highly specific for NADPH and cannot use NADH. The sequence is that of Acetone monooxygenase (methyl acetate-forming) from Gordonia sp. (strain TY-5).